Here is a 155-residue protein sequence, read N- to C-terminus: Transcriptional repressor NrdR (155 aa).

A zinc finger lies at 3 to 34 (CPFCHAEETKVVDSRLVADGAQVRRRRECLEC). Residues 49-139 (PLIIKRDGRR…VYKRFKDVSD (91 aa)) form the ATP-cone domain.

The protein belongs to the NrdR family. Zn(2+) is required as a cofactor.

Its function is as follows. Negatively regulates transcription of bacterial ribonucleotide reductase nrd genes and operons by binding to NrdR-boxes. The polypeptide is Transcriptional repressor NrdR (Legionella pneumophila (strain Lens)).